Reading from the N-terminus, the 518-residue chain is DNA-(apurinic or apyrimidinic site) endonuclease 2 (518 aa).

Residues Asn-8 and Glu-48 each coordinate Mg(2+). The active site involves Tyr-156. Mg(2+) is bound by residues Asp-197, Asn-199, Asp-303, and His-304. Asp-197 acts as the Proton donor/acceptor in catalysis. Residue His-304 is the Proton acceptor of the active site. Positions 355-405 are enriched in polar residues; the sequence is STLQHNNQTRVQTCQNKAQVRSTRPQPSQVGSSRGQKNLKSYFQPSPSCPQ. Residues 355–407 are disordered; it reads STLQHNNQTRVQTCQNKAQVRSTRPQPSQVGSSRGQKNLKSYFQPSPSCPQAS. Lys-371 is covalently cross-linked (Glycyl lysine isopeptide (Lys-Gly) (interchain with G-Cter in ubiquitin)). Residues 390–397 form a required for the interaction and colocalization with PCNA in nuclear foci in presence of oxidative-induced DNA damaging agents region; it reads QKNLKSYF. Positions 469, 472, 495, and 509 each coordinate Zn(2+). The segment at 469-518 adopts a GRF-type zinc-finger fold; sequence CGGHREPCVMRTVKKPGPNLGRRFYMCARPRGPPTDPSSRCNFFLWSRPS.

Belongs to the DNA repair enzymes AP/ExoA family. As to quaternary structure, interacts with PCNA; this interaction is triggered by reactive oxygen species and increased by misincorporation of uracil in nuclear DNA. Mg(2+) serves as cofactor. It depends on Mn(2+) as a cofactor. Post-translationally, ubiquitinated by the CUL9-RBX1 complex. Ubiquitinated by MKRN3 at Lys-371 leading to proteasomal degradation. In terms of tissue distribution, highly expressed in brain and kidney. Weakly expressed in the fetal brain.

It localises to the nucleus. It is found in the cytoplasm. The protein localises to the mitochondrion. It catalyses the reaction Exonucleolytic cleavage in the 3'- to 5'-direction to yield nucleoside 5'-phosphates.. Its activity is regulated as follows. 3'-5' exonuclease activity is activated by sodium and manganese. 3'-5' exonuclease and 3'-phosphodiesterase activities are stimulated in presence of PCNA. Functions as a weak apurinic/apyrimidinic (AP) endodeoxyribonuclease in the DNA base excision repair (BER) pathway of DNA lesions induced by oxidative and alkylating agents. Initiates repair of AP sites in DNA by catalyzing hydrolytic incision of the phosphodiester backbone immediately adjacent to the damage, generating a single-strand break with 5'-deoxyribose phosphate and 3'-hydroxyl ends. Also displays double-stranded DNA 3'-5' exonuclease, 3'-phosphodiesterase activities. Shows robust 3'-5' exonuclease activity on 3'-recessed heteroduplex DNA and is able to remove mismatched nucleotides preferentially. Also exhibits 3'-5' exonuclease activity on a single nucleotide gap containing heteroduplex DNA and on blunt-ended substrates. Shows fairly strong 3'-phosphodiesterase activity involved in the removal of 3'-damaged termini formed in DNA by oxidative agents. In the nucleus functions in the PCNA-dependent BER pathway. Plays a role in reversing blocked 3' DNA ends, problematic lesions that preclude DNA synthesis. Required for somatic hypermutation (SHM) and DNA cleavage step of class switch recombination (CSR) of immunoglobulin genes. Required for proper cell cycle progression during proliferation of peripheral lymphocytes. The polypeptide is DNA-(apurinic or apyrimidinic site) endonuclease 2 (APEX2) (Homo sapiens (Human)).